The sequence spans 129 residues: Chromatin accessibility complex protein 1 (129 aa).

N-acetylalanine is present on A2. Residue K102 is modified to N6-acetyllysine. Residues 104 to 120 adopt a coiled-coil conformation; the sequence is LKMLKEKREEEEDNEDD. The tract at residues 109-129 is disordered; it reads EKREEEEDNEDDGSDLGEALA. The span at 112 to 123 shows a compositional bias: acidic residues; the sequence is EEEEDNEDDGSD. A Phosphoserine modification is found at S122.

As to quaternary structure, heterodimer with POLE3; binds to DNA. Component of the CHRAC ISWI chromatin remodeling complex at least composed of SMARCA5/SNF2H, BAZ1A/ACF1, CHRAC1 and POLE3; the complex preferentially binds DNA through the CHRAC1-POLE3 heterodimer and possesses ATP-dependent nucleosome-remodeling activity. Within the complex, the heterodimer with POLE3 interacts with SMARCA5/SNF2H; the interaction is direct and enhances nucleosome sliding activity by the SMARCA5/SNF2H and BAZ1A/ACF1 interaction. Within the complex, the heterodimer with POLE3 interacts with BAZ1A/ACF1; the interactions are direct. In terms of tissue distribution, ubiquitously expressed.

It localises to the nucleus. Its function is as follows. Forms a complex with DNA polymerase epsilon subunit POLE3 and binds naked DNA, which is then incorporated into chromatin, aided by the nucleosome remodeling activity of ISWI/SNF2H and ACF1. Does not enhance nucleosome sliding activity of the ACF-5 ISWI chromatin remodeling complex. This chain is Chromatin accessibility complex protein 1 (Chrac1), found in Mus musculus (Mouse).